Here is a 304-residue protein sequence, read N- to C-terminus: MDVEFFADLDLDALLASFSSSAAAAGSGVSGLFAPSPPHDAEAGSPESVSSRRPSPSREAALSEIERFLMEEGPAAEEGVGAEDFFDALLVDGGEEEEEEEGKGSEAGGSTDGDSGKENEVATPDAEKEDVEAEVDGDDPMSKKKRRQMRNRDSAMKSRERKKMYVKDLETKSKYLEAECRRLSYALQCCAAENMALRQSLLKDRPVGAATAMQESAVLTETLPLVSLLWLVSIVCLLPVPGLPNRNPVARSSAGRDLATVTGKKTSSEQQLEETLLLHGRRCKGSRARIKLDTGPFRLAAAAC.

Residues 1–222 (MDVEFFADLD…MQESAVLTET (222 aa)) are Cytoplasmic-facing. Disordered stretches follow at residues 26–60 (GSGVSGLFAPSPPHDAEAGSPESVSSRRPSPSREA) and 94–163 (GEEE…ERKK). A compositionally biased stretch (low complexity) spans 45–59 (SPESVSSRRPSPSRE). The span at 127 to 139 (EKEDVEAEVDGDD) shows a compositional bias: acidic residues. One can recognise a bZIP domain in the interval 141–203 (MSKKKRRQMR…NMALRQSLLK (63 aa)). Residues 143–167 (KKKRRQMRNRDSAMKSRERKKMYVK) are basic motif. Basic and acidic residues predominate over residues 150–163 (RNRDSAMKSRERKK). The tract at residues 169-183 (LETKSKYLEAECRRL) is leucine-zipper. A helical transmembrane segment spans residues 223-243 (LPLVSLLWLVSIVCLLPVPGL). The Lumenal segment spans residues 244 to 304 (PNRNPVARSS…GPFRLAAAAC (61 aa)).

Belongs to the bZIP family.

It localises to the endoplasmic reticulum membrane. The protein localises to the nucleus. With respect to regulation, transcriptionally activated by IRE1 in response to endoplasmic reticulum (ER) stress. IRE1 cleaves a 20-bp fragment causing a frameshift of the mRNA transcript, leading to a nuclear isoform of the BZIP50 activator. Transcription factor involved in endoplasmic reticulum (ER) stress response. Acts downstream of the ER stress sensors IRE1, BZIP39 and BZIP60 to activate BiP chaperone genes. The sequence is that of bZIP transcription factor 50 from Oryza sativa subsp. japonica (Rice).